The sequence spans 352 residues: tRNA N6-adenosine threonylcarbamoyltransferase (352 aa).

Positions 115 and 119 each coordinate Fe cation. Substrate-binding positions include 138-142 (LVSGG), Asp171, Gly184, and Asn276. Asp304 is a Fe cation binding site.

It belongs to the KAE1 / TsaD family. Fe(2+) is required as a cofactor.

Its subcellular location is the cytoplasm. It catalyses the reaction L-threonylcarbamoyladenylate + adenosine(37) in tRNA = N(6)-L-threonylcarbamoyladenosine(37) in tRNA + AMP + H(+). Required for the formation of a threonylcarbamoyl group on adenosine at position 37 (t(6)A37) in tRNAs that read codons beginning with adenine. Is involved in the transfer of the threonylcarbamoyl moiety of threonylcarbamoyl-AMP (TC-AMP) to the N6 group of A37, together with TsaE and TsaB. TsaD likely plays a direct catalytic role in this reaction. The sequence is that of tRNA N6-adenosine threonylcarbamoyltransferase from Xanthomonas axonopodis pv. citri (strain 306).